A 166-amino-acid polypeptide reads, in one-letter code: V-type proton ATPase subunit c4 (166 aa).

At 1 to 13 (MASSGFSGDETAP) the chain is on the lumenal side. Residues 14 to 34 (FFGFLGAAAALVFSCMGAAYG) form a helical membrane-spanning segment. At 35 to 56 (TAKSGVGVASMGVMRPELVMKS) the chain is on the cytoplasmic side. The chain crosses the membrane as a helical span at residues 57–77 (IVPVVMAGVLGIYGLIIAVII). Over 78–96 (STGINPKAKSYYLFDGYAH) the chain is Lumenal. Residues 97–118 (LSSGLACGLAGLSAGMAIGIVG) form a helical membrane-spanning segment. At 119-130 (DAGVRANAQQPK) the chain is on the cytoplasmic side. The helical transmembrane segment at 131 to 156 (LFVGMILILIFAEALALYGLIVGIIL) threads the bilayer. The Lumenal portion of the chain corresponds to 157–166 (SSRAGQSRAE).

It belongs to the V-ATPase proteolipid subunit family. As to quaternary structure, V-ATPase is a heteromultimeric enzyme composed of a peripheral catalytic V1 complex (components A to H) attached to an integral membrane V0 proton pore complex (components: a, c, c'', d and e). The proteolipid components c and c'' are present as a hexameric ring that forms the proton-conducting pore. Interacts with APD2.

The protein localises to the vacuole membrane. Proton-conducting pore forming subunit of the membrane integral V0 complex of vacuolar ATPase. V-ATPase is responsible for acidifying a variety of intracellular compartments in eukaryotic cells. This chain is V-type proton ATPase subunit c4 (VHA-c4), found in Arabidopsis thaliana (Mouse-ear cress).